A 108-amino-acid polypeptide reads, in one-letter code: ATP-dependent Clp protease adapter protein ClpS (108 aa).

Basic and acidic residues predominate over residues 1–15 (MPHESSPDSQHEHGV). Positions 1–22 (MPHESSPDSQHEHGVAVEAARP) are disordered.

This sequence belongs to the ClpS family. Binds to the N-terminal domain of the chaperone ClpA.

In terms of biological role, involved in the modulation of the specificity of the ClpAP-mediated ATP-dependent protein degradation. The polypeptide is ATP-dependent Clp protease adapter protein ClpS (Stenotrophomonas maltophilia (strain K279a)).